Reading from the N-terminus, the 240-residue chain is C-type lectin domain family 4 member A (240 aa).

Over 1–48 (MASEITYAEVRIKNESNSSVTYSGSPAAPREKPTRHLSKPGSLLVPFT) the chain is Cytoplasmic. The ITIM motif motif lies at 5-10 (ITYAEV). The disordered stretch occupies residues 18–38 (SSVTYSGSPAAPREKPTRHLS). Residues 49 to 69 (SLMVLLLLLAITFLVAFIIYF) form a helical; Signal-anchor for type II membrane protein membrane-spanning segment. The Extracellular segment spans residues 70-240 (QKYSQFLEEK…SVCQMKKIQL (171 aa)). Intrachain disulfides connect Cys107–Cys118, Cys140–Cys233, and Cys208–Cys225. The C-type lectin domain maps to 129–235 (SKASWSESEK…SGKQQSVCQM (107 aa)). Ca(2+)-binding residues include Val149 and Glu155. Asn190 is a glycosylation site (N-linked (GlcNAc...) asparagine). Positions 200, 202, and 206 each coordinate Ca(2+). Residues 200-202 (EPS) and Glu206 contribute to the alpha-D-mannopyranose site. 211-213 (INH) provides a ligand contact to N-acetyl-D-glucosamine. Residues Asn221 and Asp222 each contribute to the Ca(2+) site.

May interact with PTPN6 via its ITIM site. Expressed by myeloid cells (dendritic cells, macrophages, and neutrophils) and B-cells.

The protein resides in the cell membrane. In terms of biological role, C-type lectin receptor that binds carbohydrates mannose and fucose but also weakly interacts with N-acetylglucosamine (GlcNAc) in a Ca(2+)-dependent manner. Involved in regulating immune reactivity. Once triggered by antigen, it is internalized by clathrin-dependent endocytosis and delivers its antigenic cargo into the antigen presentation pathway resulting in cross-priming of CD8(+) T cells. This cross-presentation and cross-priming are enhanced by TLR7 and TLR8 agonists with increased expansion of the CD8(+) T cells, high production of IFNG and TNF with reduced levels of IL4, IL5 and IL13. In plasmacytoid dendritic cells, inhibits TLR9-mediated IFNA and TNF production. May be involved via its ITIM motif (immunoreceptor tyrosine-based inhibitory motifs) in the inhibition of B-cell-receptor-mediated calcium mobilization and protein tyrosine phosphorylation. This chain is C-type lectin domain family 4 member A (Clec4a), found in Rattus norvegicus (Rat).